Reading from the N-terminus, the 293-residue chain is Probable rRNA-processing protein EBP2 homolog (293 aa).

The span at 1–37 shows a compositional bias: acidic residues; the sequence is MSLEEDIVSDDEMNMIDEDDATDSEAESLSDSDTENE. Disordered regions lie at residues 1–45 and 150–293; these read MSLE…LAEP and IEES…RQKR. The stretch at 135–190 forms a coiled coil; it reads HMEKVKSRLLHEKKQIEESEERRKARDNKRMAKEVQSQKMKERAKEKKDNIESVKK. Composition is skewed to basic and acidic residues over residues 150–167, 173–189, and 247–256; these read IEESEERRKARDNKRMAK, KMKERAKEKKDNIESVK, and KKREFRDSKF. A compositionally biased stretch (polar residues) spans 265–275; the sequence is SKQNTAETTND.

This sequence belongs to the EBP2 family. As to quaternary structure, interacts with NSN1.

It localises to the nucleus. It is found in the nucleolus. Its function is as follows. Required for the processing of the 27S pre-rRNA. Plays an important role in plant growth and senescence by modulating ribosome biogenesis in nucleolus. Associates with ribosomes. The sequence is that of Probable rRNA-processing protein EBP2 homolog from Arabidopsis thaliana (Mouse-ear cress).